The primary structure comprises 377 residues: Tubulin--tyrosine ligase (377 aa).

One can recognise a TTL domain in the interval 3–370 (TFVVRDENSS…PPDVEQPQTQ (368 aa)).

It belongs to the tubulin--tyrosine ligase family. In terms of assembly, monomer. The cofactor is Mg(2+). K(+) is required as a cofactor.

The enzyme catalyses C-terminal L-alpha-aminoacyl-L-glutamyl-L-glutamyl-[tubulin] + L-tyrosine + ATP = C-terminal L-alpha-aminoacyl-L-glutamyl-L-glutamyl-L-tyrosyl-[tubulin] + ADP + phosphate + H(+). Functionally, catalyzes the post-translational addition of a tyrosine to the C-terminal end of detyrosinated alpha-tubulin. This Homo sapiens (Human) protein is Tubulin--tyrosine ligase (TTL).